The following is a 250-amino-acid chain: 26 kDa periplasmic immunogenic protein (250 aa).

The signal sequence occupies residues 1–28 (MNTRASNFLAASFSTIMLVGAFSLPAFA).

The protein resides in the periplasm. The chain is 26 kDa periplasmic immunogenic protein (bp26) from Brucella abortus (strain S19).